The primary structure comprises 213 residues: Phosphoribosyl-dephospho-CoA transferase (213 aa).

Active-site residues include Asp135 and Asp137.

It belongs to the MdcG family.

The enzyme catalyses apo-[malonate decarboxylase ACP] + 2'-(5''-triphospho-alpha-D-ribosyl)-3'-dephospho-CoA = holo-[malonate decarboxylase ACP] + diphosphate. In terms of biological role, transfers 2'-(5-triphosphoribosyl)-3'-dephosphocoenzyme-A to the apo-[acyl-carrier-protein] of the malonate decarboxylase to yield holo-[acyl-carrier-protein]. The polypeptide is Phosphoribosyl-dephospho-CoA transferase (Xanthomonas axonopodis pv. citri (strain 306)).